Consider the following 54-residue polypeptide: Sperm protamine P3 (54 aa).

Positions 1 to 54 (RRRRRRGKGKGGKKKKGKKRRRRGRKGKGKGKKKGKRKGKRGGKRRRRRRKGKK) are disordered.

Gonads.

It is found in the nucleus. The protein resides in the chromosome. Its function is as follows. Protamines substitute for histones in the chromatin of sperm during the haploid phase of spermatogenesis. They compact sperm DNA into a highly condensed, stable and inactive complex. The sequence is that of Sperm protamine P3 from Bolinus brandaris (Purple dye murex).